The following is a 235-amino-acid chain: MLLTDAYEIAKFIKDAKKQTPVKLYVNGDLAGLTIEGATAFGTDQSKIFFADAGLASTFLEEYADRITEVHVEYDRRNSAVPMLDTRHLNARIEPGSWIRDHVVIGDNAVIMMGAIINIGASIGDGTMIDMNAVVGARGTIGKNVHVGAGAVVAGVLEPPSKTPVIIEDGVLIGANAVILEGVRVGKDAVVAAGSVVTEDVPAGSVVAGTPARVIKQKDEKTAEKTQLVDDLRSL.

It belongs to the transferase hexapeptide repeat family. DapH subfamily.

The catalysed reaction is (S)-2,3,4,5-tetrahydrodipicolinate + acetyl-CoA + H2O = L-2-acetamido-6-oxoheptanedioate + CoA. The protein operates within amino-acid biosynthesis; L-lysine biosynthesis via DAP pathway; LL-2,6-diaminopimelate from (S)-tetrahydrodipicolinate (acetylase route): step 1/3. Its function is as follows. Catalyzes the transfer of an acetyl group from acetyl-CoA to tetrahydrodipicolinate. This chain is 2,3,4,5-tetrahydropyridine-2,6-dicarboxylate N-acetyltransferase, found in Exiguobacterium sibiricum (strain DSM 17290 / CCUG 55495 / CIP 109462 / JCM 13490 / 255-15).